Here is a 117-residue protein sequence, read N- to C-terminus: Large ribosomal subunit protein bL19 (117 aa).

Belongs to the bacterial ribosomal protein bL19 family.

In terms of biological role, this protein is located at the 30S-50S ribosomal subunit interface and may play a role in the structure and function of the aminoacyl-tRNA binding site. The polypeptide is Large ribosomal subunit protein bL19 (Colwellia psychrerythraea (strain 34H / ATCC BAA-681) (Vibrio psychroerythus)).